A 73-amino-acid polypeptide reads, in one-letter code: Large ribosomal subunit protein uL29 (73 aa).

It belongs to the universal ribosomal protein uL29 family.

The chain is Large ribosomal subunit protein uL29 (rpmC) from Synechocystis sp. (strain ATCC 27184 / PCC 6803 / Kazusa).